The following is a 356-amino-acid chain: uncharacterized protein (356 aa).

A run of 6 helical transmembrane segments spans residues 2 to 22 (IESI…FHRL), 35 to 55 (GYVT…PIPF), 76 to 96 (NMGY…FAFG), 99 to 119 (LLYG…GPFL), 124 to 144 (IVAL…LSIF), and 152 to 172 (EIAF…ITFV). Residues 218–353 (ESLALLLIDI…GRNQVMFNPI (136 aa)) enclose the GGDEF domain.

It is found in the cell membrane. This is an uncharacterized protein from Staphylococcus haemolyticus (strain JCSC1435).